The sequence spans 172 residues: Putative defense protein (172 aa).

The N-terminal stretch at 1 to 21 (MKLVVAAVLAMAASRWRRLSA) is a signal peptide. The Reelin domain maps to 22-172 (HGQVPSSTCA…LRQLDNAVAA (151 aa)).

This sequence belongs to the insect defense protein family. In adults, in hemolymph.

It is found in the secreted. Its function is as follows. May have antimicrobial activity. The polypeptide is Putative defense protein (Locusta migratoria (Migratory locust)).